The primary structure comprises 114 residues: uncharacterized protein (114 aa).

This is an uncharacterized protein from Acanthamoeba polyphaga mimivirus (APMV).